Here is a 299-residue protein sequence, read N- to C-terminus: Glycine--tRNA ligase alpha subunit (299 aa).

This sequence belongs to the class-II aminoacyl-tRNA synthetase family. Tetramer of two alpha and two beta subunits.

It localises to the cytoplasm. It carries out the reaction tRNA(Gly) + glycine + ATP = glycyl-tRNA(Gly) + AMP + diphosphate. This is Glycine--tRNA ligase alpha subunit from Pediococcus pentosaceus (strain ATCC 25745 / CCUG 21536 / LMG 10740 / 183-1w).